The following is an 88-amino-acid chain: Toxin RelE3 (88 aa).

Belongs to the RelE toxin family. Forms heterodimers with RelB3 and possibly a heterotetramer RelE3-RelB3(2)-RelE3 from 2 heterodimers. The heterotetramer is probably not very stable in solution.

In terms of biological role, toxic component of a type II toxin-antitoxin (TA) system. Has RNase activity. Is very toxic upon expression in E.coli. Its toxic activity is probably neutralized by the cognate antitoxin RelB3. The protein is Toxin RelE3 (relE3) of Methanocaldococcus jannaschii (strain ATCC 43067 / DSM 2661 / JAL-1 / JCM 10045 / NBRC 100440) (Methanococcus jannaschii).